Here is a 349-residue protein sequence, read N- to C-terminus: Anthranilate phosphoribosyltransferase (349 aa).

5-phospho-alpha-D-ribose 1-diphosphate contacts are provided by residues glycine 82, glycine 85–aspartate 86, asparagine 92–threonine 95, lysine 110–serine 118, and serine 122. Glycine 82 is a binding site for anthranilate. Residue serine 94 participates in Mg(2+) binding. Asparagine 113 provides a ligand contact to anthranilate. Arginine 168 is an anthranilate binding site. Positions 227 and 228 each coordinate Mg(2+).

It belongs to the anthranilate phosphoribosyltransferase family. Homodimer. Mg(2+) serves as cofactor.

The catalysed reaction is N-(5-phospho-beta-D-ribosyl)anthranilate + diphosphate = 5-phospho-alpha-D-ribose 1-diphosphate + anthranilate. Its pathway is amino-acid biosynthesis; L-tryptophan biosynthesis; L-tryptophan from chorismate: step 2/5. In terms of biological role, catalyzes the transfer of the phosphoribosyl group of 5-phosphorylribose-1-pyrophosphate (PRPP) to anthranilate to yield N-(5'-phosphoribosyl)-anthranilate (PRA). The polypeptide is Anthranilate phosphoribosyltransferase (Acinetobacter baumannii (strain SDF)).